Here is a 78-residue protein sequence, read N- to C-terminus: Major outer membrane lipoprotein Lpp 1 (78 aa).

The N-terminal stretch at 1–20 (MNRTKLVLGAVILGSTLLAG) is a signal peptide. Cys21 is lipidated: N-palmitoyl cysteine. Cys21 is lipidated: S-diacylglycerol cysteine. Repeats lie at residues 24 to 34 (NAKIDQLSSDV) and 38 to 48 (NAKVDQLSNDV). Positions 27-75 (IDQLSSDVQTLNAKVDQLSNDVNAMRSDVQAAKDDAARANQRLDNQATK) form a coiled coil. The segment at 56–78 (QAAKDDAARANQRLDNQATKYRK) is disordered. Residues 68-78 (RLDNQATKYRK) are compositionally biased toward polar residues. Position 78 is an N6-murein peptidoglycan lysine (Lys78).

The protein belongs to the Lpp family. As to quaternary structure, homotrimer.

The protein localises to the cell outer membrane. It localises to the secreted. It is found in the cell wall. Its function is as follows. A highly abundant outer membrane lipoprotein that controls the distance between the inner and outer membranes. The only protein known to be covalently linked to the peptidoglycan network (PGN). Also non-covalently binds the PGN. The link between the cell outer membrane and PGN contributes to maintenance of the structural and functional integrity of the cell envelope, and maintains the correct distance between the PGN and the outer membrane. This chain is Major outer membrane lipoprotein Lpp 1, found in Salmonella paratyphi A (strain ATCC 9150 / SARB42).